The primary structure comprises 303 residues: Beta-carotene 3-hydroxylase 2, chloroplastic (303 aa).

A chloroplast-targeting transit peptide spans 1 to 52 (MAAGLSTIAVTLKPLNRSSFSANHPISTAVFPPSLRFNGFRRRKILTVCFVV). The next 2 helical transmembrane spans lie at 96-116 (YLIA…MAVY) and 130-150 (VLEM…MEFW). The Fatty acid hydroxylase domain maps to 143 to 270 (AAVGMEFWAR…KFKGVPYGLF (128 aa)). The short motif at 155 to 160 (HRALWH) is the Histidine box-1 element. The Histidine box-2 motif lies at 165–171 (NMHESHH). 2 helical membrane passes run 180–200 (LNDV…YYGF) and 206–226 (VPGL…AYMF). The Histidine box-3 signature appears at 228–233 (HDGLVH). The Histidine box-4 signature appears at 254–258 (HQLHH).

Belongs to the sterol desaturase family. Homodimer. In terms of tissue distribution, expressed in leaves, flowers, stems, roots and siliques.

The protein localises to the plastid. It localises to the chloroplast membrane. The catalysed reaction is all-trans-beta-carotene + 4 reduced [2Fe-2S]-[ferredoxin] + 2 O2 + 4 H(+) = all-trans-zeaxanthin + 4 oxidized [2Fe-2S]-[ferredoxin] + 2 H2O. Functionally, nonheme diiron monooxygenase involved in the biosynthesis of xanthophylls. Specific for beta-ring hydroxylations of beta-carotene. Also has a low activity toward the beta- and epsilon-rings of alpha-carotene. No activity with acyclic carotenoids such as lycopene and neurosporene. Uses ferredoxin as an electron donor. This Arabidopsis thaliana (Mouse-ear cress) protein is Beta-carotene 3-hydroxylase 2, chloroplastic (BETA-OHASE 2).